Reading from the N-terminus, the 405-residue chain is Arginine biosynthesis bifunctional protein ArgJ (405 aa).

Substrate contacts are provided by threonine 152, lysine 178, threonine 189, glutamate 276, asparagine 400, and threonine 405. Residue threonine 189 is the Nucleophile of the active site.

This sequence belongs to the ArgJ family. In terms of assembly, heterotetramer of two alpha and two beta chains.

The protein resides in the cytoplasm. It catalyses the reaction N(2)-acetyl-L-ornithine + L-glutamate = N-acetyl-L-glutamate + L-ornithine. The catalysed reaction is L-glutamate + acetyl-CoA = N-acetyl-L-glutamate + CoA + H(+). The protein operates within amino-acid biosynthesis; L-arginine biosynthesis; L-ornithine and N-acetyl-L-glutamate from L-glutamate and N(2)-acetyl-L-ornithine (cyclic): step 1/1. Its pathway is amino-acid biosynthesis; L-arginine biosynthesis; N(2)-acetyl-L-ornithine from L-glutamate: step 1/4. Functionally, catalyzes two activities which are involved in the cyclic version of arginine biosynthesis: the synthesis of N-acetylglutamate from glutamate and acetyl-CoA as the acetyl donor, and of ornithine by transacetylation between N(2)-acetylornithine and glutamate. The chain is Arginine biosynthesis bifunctional protein ArgJ from Pseudomonas syringae pv. syringae (strain B728a).